We begin with the raw amino-acid sequence, 1184 residues long: DNA-directed RNA polymerase subunit beta (1184 aa).

The interval 1160–1184 is disordered; sequence DDDFTNQNDAFNIVQPENAAAEKTE.

It belongs to the RNA polymerase beta chain family. In terms of assembly, the RNAP catalytic core consists of 2 alpha, 1 beta, 1 beta' and 1 omega subunit. When a sigma factor is associated with the core the holoenzyme is formed, which can initiate transcription.

The catalysed reaction is RNA(n) + a ribonucleoside 5'-triphosphate = RNA(n+1) + diphosphate. DNA-dependent RNA polymerase catalyzes the transcription of DNA into RNA using the four ribonucleoside triphosphates as substrates. This Listeria welshimeri serovar 6b (strain ATCC 35897 / DSM 20650 / CCUG 15529 / CIP 8149 / NCTC 11857 / SLCC 5334 / V8) protein is DNA-directed RNA polymerase subunit beta.